Consider the following 353-residue polypeptide: Holliday junction branch migration complex subunit RuvB (353 aa).

The interval 1–183 (MSGEGLVSAA…FGFTAHMDFY (183 aa)) is large ATPase domain (RuvB-L). ATP-binding positions include leucine 22, arginine 23, glycine 64, lysine 67, threonine 68, serine 69, 130–132 (EDF), arginine 173, tyrosine 183, and arginine 220. Mg(2+) is bound at residue threonine 68. Residues 184-254 (DAAELALVLT…VARAALRIYD (71 aa)) form a small ATPAse domain (RuvB-S) region. Residues 257 to 353 (ALGLDRLDRA…ALFGEDLPAS (97 aa)) are head domain (RuvB-H). Arginine 312 and arginine 317 together coordinate DNA.

It belongs to the RuvB family. In terms of assembly, homohexamer. Forms an RuvA(8)-RuvB(12)-Holliday junction (HJ) complex. HJ DNA is sandwiched between 2 RuvA tetramers; dsDNA enters through RuvA and exits via RuvB. An RuvB hexamer assembles on each DNA strand where it exits the tetramer. Each RuvB hexamer is contacted by two RuvA subunits (via domain III) on 2 adjacent RuvB subunits; this complex drives branch migration. In the full resolvosome a probable DNA-RuvA(4)-RuvB(12)-RuvC(2) complex forms which resolves the HJ.

Its subcellular location is the cytoplasm. It catalyses the reaction ATP + H2O = ADP + phosphate + H(+). Functionally, the RuvA-RuvB-RuvC complex processes Holliday junction (HJ) DNA during genetic recombination and DNA repair, while the RuvA-RuvB complex plays an important role in the rescue of blocked DNA replication forks via replication fork reversal (RFR). RuvA specifically binds to HJ cruciform DNA, conferring on it an open structure. The RuvB hexamer acts as an ATP-dependent pump, pulling dsDNA into and through the RuvAB complex. RuvB forms 2 homohexamers on either side of HJ DNA bound by 1 or 2 RuvA tetramers; 4 subunits per hexamer contact DNA at a time. Coordinated motions by a converter formed by DNA-disengaged RuvB subunits stimulates ATP hydrolysis and nucleotide exchange. Immobilization of the converter enables RuvB to convert the ATP-contained energy into a lever motion, pulling 2 nucleotides of DNA out of the RuvA tetramer per ATP hydrolyzed, thus driving DNA branch migration. The RuvB motors rotate together with the DNA substrate, which together with the progressing nucleotide cycle form the mechanistic basis for DNA recombination by continuous HJ branch migration. Branch migration allows RuvC to scan DNA until it finds its consensus sequence, where it cleaves and resolves cruciform DNA. The chain is Holliday junction branch migration complex subunit RuvB from Parafrankia sp. (strain EAN1pec).